The following is a 523-amino-acid chain: (R)-citramalate synthase (523 aa).

The region spanning 6–272 is the Pyruvate carboxyltransferase domain; it reads VEVLDTTLRD…KGNESLKKLK (267 aa).

This sequence belongs to the alpha-IPM synthase/homocitrate synthase family.

It carries out the reaction pyruvate + acetyl-CoA + H2O = (3R)-citramalate + CoA + H(+). Its pathway is amino-acid biosynthesis; L-isoleucine biosynthesis; 2-oxobutanoate from pyruvate: step 1/3. Its activity is regulated as follows. Inhibited by isoleucine. Functionally, catalyzes the condensation of pyruvate and acetyl-coenzyme A to form (R)-citramalate. Makes part of a pathway for isoleucine biosynthesis, i.e. the citramalate-dependent pathway. Also displays a low alpha-isopropylmalate synthase activity, using 2-oxoisovalerate as substrate, but is unable to use 2-oxoglutarate. The chain is (R)-citramalate synthase from Sulfolobus acidocaldarius (strain ATCC 33909 / DSM 639 / JCM 8929 / NBRC 15157 / NCIMB 11770).